Reading from the N-terminus, the 213-residue chain is Nicotinate-nucleotide adenylyltransferase (213 aa).

The protein belongs to the NadD family.

The catalysed reaction is nicotinate beta-D-ribonucleotide + ATP + H(+) = deamido-NAD(+) + diphosphate. It participates in cofactor biosynthesis; NAD(+) biosynthesis; deamido-NAD(+) from nicotinate D-ribonucleotide: step 1/1. Functionally, catalyzes the reversible adenylation of nicotinate mononucleotide (NaMN) to nicotinic acid adenine dinucleotide (NaAD). The chain is Nicotinate-nucleotide adenylyltransferase from Salmonella typhi.